A 320-amino-acid chain; its full sequence is ATP-dependent 6-phosphofructokinase (320 aa).

G12 lines the ATP pocket. 22 to 26 (RGVVR) lines the ADP pocket. Residues 73–74 (RF) and 103–106 (GDGS) each bind ATP. Mg(2+) is bound at residue D104. A substrate-binding site is contributed by 126–128 (TID). D128 functions as the Proton acceptor in the catalytic mechanism. R155 lines the ADP pocket. Substrate is bound by residues R163 and 170 to 172 (MGR). ADP is bound by residues 186–188 (GCE), K212, and 214–216 (KKH). Residues E223, R244, and 250 to 253 (HIQR) contribute to the substrate site.

This sequence belongs to the phosphofructokinase type A (PFKA) family. ATP-dependent PFK group I subfamily. Prokaryotic clade 'B1' sub-subfamily. Homotetramer. The cofactor is Mg(2+).

The protein resides in the cytoplasm. It carries out the reaction beta-D-fructose 6-phosphate + ATP = beta-D-fructose 1,6-bisphosphate + ADP + H(+). Its pathway is carbohydrate degradation; glycolysis; D-glyceraldehyde 3-phosphate and glycerone phosphate from D-glucose: step 3/4. With respect to regulation, allosterically activated by ADP and other diphosphonucleosides, and allosterically inhibited by phosphoenolpyruvate. Functionally, catalyzes the phosphorylation of D-fructose 6-phosphate to fructose 1,6-bisphosphate by ATP, the first committing step of glycolysis. This Blochmanniella floridana protein is ATP-dependent 6-phosphofructokinase.